Reading from the N-terminus, the 101-residue chain is NADH-quinone oxidoreductase subunit K (101 aa).

Helical transmembrane passes span 4–24 (LSHY…GIFL), 30–50 (IVLL…FIAF), and 61–81 (IFVF…LAIL).

It belongs to the complex I subunit 4L family. In terms of assembly, NDH-1 is composed of 14 different subunits. Subunits NuoA, H, J, K, L, M, N constitute the membrane sector of the complex.

It is found in the cell inner membrane. It catalyses the reaction a quinone + NADH + 5 H(+)(in) = a quinol + NAD(+) + 4 H(+)(out). Functionally, NDH-1 shuttles electrons from NADH, via FMN and iron-sulfur (Fe-S) centers, to quinones in the respiratory chain. The immediate electron acceptor for the enzyme in this species is believed to be ubiquinone. Couples the redox reaction to proton translocation (for every two electrons transferred, four hydrogen ions are translocated across the cytoplasmic membrane), and thus conserves the redox energy in a proton gradient. This chain is NADH-quinone oxidoreductase subunit K, found in Aromatoleum aromaticum (strain DSM 19018 / LMG 30748 / EbN1) (Azoarcus sp. (strain EbN1)).